The sequence spans 421 residues: Imidazolonepropionase (421 aa).

Residues His81 and His83 each contribute to the Fe(3+) site. Residues His81 and His83 each coordinate Zn(2+). Residues Arg90, Tyr153, and His186 each coordinate 4-imidazolone-5-propanoate. Tyr153 is a binding site for N-formimidoyl-L-glutamate. Position 251 (His251) interacts with Fe(3+). His251 contributes to the Zn(2+) binding site. Glu254 is a binding site for 4-imidazolone-5-propanoate. Residue Asp326 participates in Fe(3+) binding. Asp326 provides a ligand contact to Zn(2+). N-formimidoyl-L-glutamate-binding residues include Asn328 and Gly330. Ser331 serves as a coordination point for 4-imidazolone-5-propanoate.

Belongs to the metallo-dependent hydrolases superfamily. HutI family. Requires Zn(2+) as cofactor. Fe(3+) serves as cofactor.

The protein resides in the cytoplasm. It carries out the reaction 4-imidazolone-5-propanoate + H2O = N-formimidoyl-L-glutamate. It functions in the pathway amino-acid degradation; L-histidine degradation into L-glutamate; N-formimidoyl-L-glutamate from L-histidine: step 3/3. Its function is as follows. Catalyzes the hydrolytic cleavage of the carbon-nitrogen bond in imidazolone-5-propanoate to yield N-formimidoyl-L-glutamate. It is the third step in the universal histidine degradation pathway. This chain is Imidazolonepropionase, found in Streptococcus pyogenes serotype M4 (strain MGAS10750).